A 436-amino-acid polypeptide reads, in one-letter code: uncharacterized protein (436 aa).

The N-terminal stretch at 1-20 (MKCAVAILLVCLTLQQAAYG) is a signal peptide. 3 coiled-coil regions span residues 25–87 (EEVK…ALRN), 154–207 (MRKT…NSVE), and 247–329 (ESWG…ASLL). Over residues 371-390 (EEEIAPSTEEDGSEELEADS) the composition is skewed to acidic residues. Positions 371–419 (EEEIAPSTEEDGSEELEADSYDSKVGGESPISQRTEERQGAEERSRLRR) are disordered. Positions 404–415 (RTEERQGAEERS) are enriched in basic and acidic residues.

In terms of tissue distribution, component of the acid-insoluble organic matrix of the aragonitic skeleton (at protein level).

Its subcellular location is the secreted. This is an uncharacterized protein from Acropora millepora (Staghorn coral).